A 260-amino-acid polypeptide reads, in one-letter code: Major prion protein (260 aa).

The N-terminal stretch at 1-22 (MANLGCWMLVLFVATWSDLGLC) is a signal peptide. The interaction with GRB2, ERI3 and SYN1 stretch occupies residues 23–237 (KKRPKPGGWN…ESQAYYQRGS (215 aa)). The interval 26-112 (PKPGGWNTGG…HNQWNKPSKP (87 aa)) is disordered. A run of 6 repeats spans residues 51–58 (PQGGGWGQ), 59–66 (PHGGGWGQ), 67–74 (PHGGGWGQ), 75–82 (PHGGGWGQ), 83–90 (PHGGGWGQ), and 91–98 (PHGGGWGQ). Residues 51–98 (PQGGGWGQPHGGGWGQPHGGGWGQPHGGGWGQPHGGGWGQPHGGGWGQ) form a 6 X 8 AA tandem repeats of P-H-G-G-G-W-G-Q region. Over residues 52–102 (QGGGWGQPHGGGWGQPHGGGWGQPHGGGWGQPHGGGWGQPHGGGWGQGGGT) the composition is skewed to gly residues. Residues H68, G69, G70, H76, G77, G78, H84, G85, G86, H92, G93, and G94 each contribute to the Cu(2+) site. C186 and C221 are joined by a disulfide. N188 and N204 each carry an N-linked (GlcNAc...) asparagine glycan. A lipid anchor (GPI-anchor amidated serine) is attached at S237. The propeptide at 238–260 (SMVLFSSPPVILLISFLIFLIVG) is removed in mature form.

The protein belongs to the prion family. Monomer and homodimer. Has a tendency to aggregate into amyloid fibrils containing a cross-beta spine, formed by a steric zipper of superposed beta-strands. Soluble oligomers may represent an intermediate stage on the path to fibril formation. Copper binding may promote oligomerization. Interacts with GRB2, APP, ERI3/PRNPIP and SYN1. Mislocalized cytosolically exposed PrP interacts with MGRN1; this interaction alters MGRN1 subcellular location and causes lysosomal enlargement. Interacts with KIAA1191.

The protein resides in the cell membrane. It localises to the golgi apparatus. Its function is as follows. Its primary physiological function is unclear. Has cytoprotective activity against internal or environmental stresses. May play a role in neuronal development and synaptic plasticity. May be required for neuronal myelin sheath maintenance. May play a role in iron uptake and iron homeostasis. Soluble oligomers are toxic to cultured neuroblastoma cells and induce apoptosis (in vitro). Association with GPC1 (via its heparan sulfate chains) targets PRNP to lipid rafts. Also provides Cu(2+) or Zn(2+) for the ascorbate-mediated GPC1 deaminase degradation of its heparan sulfate side chains. The sequence is that of Major prion protein (PRNP) from Saimiri sciureus (Common squirrel monkey).